Here is a 381-residue protein sequence, read N- to C-terminus: Chaperone protein DnaJ (381 aa).

The J domain occupies 5 to 70 (DFYEVLGVSR…QKKAAYDQYG (66 aa)). The segment at 136 to 214 (GVTKEIEVPT…CHGQGRKQKT (79 aa)) adopts a CR-type zinc-finger fold. Cysteine 149, cysteine 152, cysteine 166, cysteine 169, cysteine 188, cysteine 191, cysteine 202, and cysteine 205 together coordinate Zn(2+). 4 CXXCXGXG motif repeats span residues 149–156 (CDSCDGSG), 166–173 (CGTCHGHG), 188–195 (CPTCHGKG), and 202–209 (CNECHGQG).

This sequence belongs to the DnaJ family. As to quaternary structure, homodimer. The cofactor is Zn(2+).

The protein localises to the cytoplasm. Functionally, participates actively in the response to hyperosmotic and heat shock by preventing the aggregation of stress-denatured proteins and by disaggregating proteins, also in an autonomous, DnaK-independent fashion. Unfolded proteins bind initially to DnaJ; upon interaction with the DnaJ-bound protein, DnaK hydrolyzes its bound ATP, resulting in the formation of a stable complex. GrpE releases ADP from DnaK; ATP binding to DnaK triggers the release of the substrate protein, thus completing the reaction cycle. Several rounds of ATP-dependent interactions between DnaJ, DnaK and GrpE are required for fully efficient folding. Also involved, together with DnaK and GrpE, in the DNA replication of plasmids through activation of initiation proteins. The polypeptide is Chaperone protein DnaJ (Vibrio parahaemolyticus serotype O3:K6 (strain RIMD 2210633)).